Consider the following 156-residue polypeptide: MALEKSLALLPLLVLVLLVLGWVQPSLGRESRAKKFQRQHMDSDGSPSSNPTYCNDMMRRRNMTQGRCKPVNTFVHEPLVDVQDVCFQEKVTCKNGQANCYKSSSSMHITDCRLTNGSRYPNCAYRTSQKERHIIVACEGNPYVPVHFDASVEDST.

An N-terminal signal peptide occupies residues Met-1 to Gly-28. The span at Ala-33–Ser-43 shows a compositional bias: basic and acidic residues. The tract at residues Ala-33–Thr-52 is disordered. Substrate is bound by residues Lys-35 and Arg-38. Residue His-40 is the Proton acceptor of the active site. Cystine bridges form between Cys-54–Cys-112, Cys-68–Cys-123, Cys-86–Cys-138, and Cys-93–Cys-100. N-linked (GlcNAc...) asparagine glycosylation occurs at Asn-62. Residues Lys-69–Thr-73, Lys-94, and Arg-113 each bind substrate. N-linked (GlcNAc...) asparagine glycosylation is present at Asn-116. His-147 (proton donor) is an active-site residue.

The protein belongs to the pancreatic ribonuclease family. Monomer. Interacts with and forms tight 1:1 complexes with RNH1. Dimerization of two such complexes may occur. Interaction with RNH1 inhibits this protein.

It localises to the secreted. It carries out the reaction an [RNA] containing cytidine + H2O = an [RNA]-3'-cytidine-3'-phosphate + a 5'-hydroxy-ribonucleotide-3'-[RNA].. The enzyme catalyses an [RNA] containing uridine + H2O = an [RNA]-3'-uridine-3'-phosphate + a 5'-hydroxy-ribonucleotide-3'-[RNA].. Its function is as follows. Endonuclease that catalyzes the cleavage of RNA on the 3' side of pyrimidine nucleotides. Acts on single-stranded and double-stranded RNA. The sequence is that of Ribonuclease pancreatic (RNASE1) from Saimiri sciureus (Common squirrel monkey).